A 157-amino-acid chain; its full sequence is Large ribosomal subunit protein uL15 (157 aa).

Residues 1-64 (MKLNEIPAVP…MPLQRRLPKR (64 aa)) form a disordered region. The span at 21–31 (RGPGSGNGKTA) shows a compositional bias: gly residues.

This sequence belongs to the universal ribosomal protein uL15 family. As to quaternary structure, part of the 50S ribosomal subunit.

Its function is as follows. Binds to the 23S rRNA. This chain is Large ribosomal subunit protein uL15, found in Magnetococcus marinus (strain ATCC BAA-1437 / JCM 17883 / MC-1).